Reading from the N-terminus, the 254-residue chain is MENIMNNPVIGVVMCRNRLKGHATQTLQEKYLNAIIHAGGLPIALPHALAEPSLLEQLLPKLDGIYLPGSPSNVQPHLYGENGDEPDADPGRDLLSMAIINAALERRIPIFAICRGLQELVVATGGSLHRKLCEQPELLEHREDPELPVEQQYAPSHEVQVEEGGLLSALLPECSNFWVNSLHGQGAKVVSPRLRVEARSPDGLVEAVSVINHPFALGVQWHPEWNSSEYALSRILFEGFITACQHHIAEKQRL.

Residues 16-250 (RNRLKGHATQ…ITACQHHIAE (235 aa)) form the Glutamine amidotransferase type-1 domain. Cys114 serves as the catalytic Nucleophile. Catalysis depends on residues His222 and Glu224.

This sequence belongs to the peptidase C26 family. As to quaternary structure, homodimer.

It carries out the reaction 4-(gamma-L-glutamylamino)butanoate + H2O = 4-aminobutanoate + L-glutamate. The protein operates within amine and polyamine degradation; putrescine degradation; 4-aminobutanoate from putrescine: step 4/4. Functionally, involved in the breakdown of putrescine via hydrolysis of the gamma-glutamyl linkage of gamma-glutamyl-gamma-aminobutyrate. The sequence is that of Gamma-glutamyl-gamma-aminobutyrate hydrolase PuuD (puuD) from Escherichia coli (strain K12).